Reading from the N-terminus, the 121-residue chain is Large ribosomal subunit protein bL20 (121 aa).

This sequence belongs to the bacterial ribosomal protein bL20 family.

Functionally, binds directly to 23S ribosomal RNA and is necessary for the in vitro assembly process of the 50S ribosomal subunit. It is not involved in the protein synthesizing functions of that subunit. The polypeptide is Large ribosomal subunit protein bL20 (Ruegeria sp. (strain TM1040) (Silicibacter sp.)).